Here is a 372-residue protein sequence, read N- to C-terminus: MDPDRQSDIAALDTTLTTVERVVNVDGLRGRIQQLESDASDPKLWDDQARAQKVTSDLSHAQNELRRVEELRSRLDDLPVLYELAAEEEGAGSSEAFAEADAELAKLREDIAGMEVRTLLSGEYDEREALVNIRSGAGGVDAADWAEMLMRMYIRWAEQHDYPVEVFDTSYAEEAGIKSATFAVHAPYAYGNLSVEQGTHRLVRISPFDNQSRRQTSFADVEVLPVVETTDHIDIPEGDVRVDVYRSSGPGGQSVNTTDSAVRLTHIPTGIVVTCQNEKSQLQNKVSAMRVLQAKLLERKRLEERAEMDALKGDGGSSWGNQMRSYVLHPYQMVKDLRTEYEVGNPAAVLDGDIDGFLEAGIRWRNQKVDDE.

Glutamine 253 bears the N5-methylglutamine mark.

This sequence belongs to the prokaryotic/mitochondrial release factor family. Methylated by PrmC. Methylation increases the termination efficiency of RF2.

The protein localises to the cytoplasm. Functionally, peptide chain release factor 2 directs the termination of translation in response to the peptide chain termination codons UGA and UAA. The polypeptide is Peptide chain release factor 2 (Mycolicibacterium gilvum (strain PYR-GCK) (Mycobacterium gilvum (strain PYR-GCK))).